We begin with the raw amino-acid sequence, 484 residues long: RNA polymerase sigma-54 factor 1 (484 aa).

A DNA-binding region (H-T-H motif) is located at residues 355 to 374; that stretch reads NLKAVAEAIQMHESTVSRVT. Positions 444–452 match the RPON box motif; sequence ARRTVAKYR. The segment at 464-484 is disordered; the sequence is RRDNMWSTMNSRASGGTGLDK. The span at 468–477 shows a compositional bias: polar residues; the sequence is MWSTMNSRAS.

This sequence belongs to the sigma-54 factor family.

Sigma factors are initiation factors that promote the attachment of RNA polymerase to specific initiation sites and are then released. This sigma factor is responsible for the expression of the nitrogen fixation genes. The chain is RNA polymerase sigma-54 factor 1 (rpoN1) from Bradyrhizobium diazoefficiens (strain JCM 10833 / BCRC 13528 / IAM 13628 / NBRC 14792 / USDA 110).